Reading from the N-terminus, the 185-residue chain is Elongation factor P (185 aa).

Belongs to the elongation factor P family.

Its subcellular location is the cytoplasm. Its pathway is protein biosynthesis; polypeptide chain elongation. Functionally, involved in peptide bond synthesis. Stimulates efficient translation and peptide-bond synthesis on native or reconstituted 70S ribosomes in vitro. Probably functions indirectly by altering the affinity of the ribosome for aminoacyl-tRNA, thus increasing their reactivity as acceptors for peptidyl transferase. The chain is Elongation factor P from Bacillus cereus (strain G9842).